We begin with the raw amino-acid sequence, 851 residues long: Molybdenum cofactor sulfurase (851 aa).

K249 carries the post-translational modification N6-(pyridoxal phosphate)lysine. C413 is an active-site residue. Residues 665–844 (QYLRKFVMPG…LMVGDIVTPS (180 aa)) form the MOSC domain.

It belongs to the class-V pyridoxal-phosphate-dependent aminotransferase family. MOCOS subfamily. Pyridoxal 5'-phosphate is required as a cofactor.

It carries out the reaction Mo-molybdopterin + L-cysteine + AH2 = thio-Mo-molybdopterin + L-alanine + A + H2O. Its pathway is cofactor biosynthesis; molybdopterin biosynthesis. Functionally, sulfurates the molybdenum cofactor. Sulfation of molybdenum is essential for xanthine dehydrogenase (XDH) and aldehyde oxidase (ADO) enzymes in which molybdenum cofactor is liganded by 1 oxygen and 1 sulfur atom in active form. In Neosartorya fischeri (strain ATCC 1020 / DSM 3700 / CBS 544.65 / FGSC A1164 / JCM 1740 / NRRL 181 / WB 181) (Aspergillus fischerianus), this protein is Molybdenum cofactor sulfurase.